We begin with the raw amino-acid sequence, 249 residues long: 2,3-bisphosphoglycerate-dependent phosphoglycerate mutase (249 aa).

Residues 8 to 15 (RHGESTWN), 21 to 22 (TG), Arg-60, 87 to 90 (ERHY), Lys-98, 114 to 115 (RR), and 183 to 184 (GN) each bind substrate. His-9 functions as the Tele-phosphohistidine intermediate in the catalytic mechanism. Glu-87 (proton donor/acceptor) is an active-site residue.

The protein belongs to the phosphoglycerate mutase family. BPG-dependent PGAM subfamily.

It catalyses the reaction (2R)-2-phosphoglycerate = (2R)-3-phosphoglycerate. The protein operates within carbohydrate degradation; glycolysis; pyruvate from D-glyceraldehyde 3-phosphate: step 3/5. Its function is as follows. Catalyzes the interconversion of 2-phosphoglycerate and 3-phosphoglycerate. This Methanoregula boonei (strain DSM 21154 / JCM 14090 / 6A8) protein is 2,3-bisphosphoglycerate-dependent phosphoglycerate mutase.